A 294-amino-acid chain; its full sequence is N-acetylmuramic acid 6-phosphate etherase (294 aa).

The region spanning 56 to 219 (TSYSLKNGGR…STLSMVSVGK (164 aa)) is the SIS domain. Glutamate 84 serves as the catalytic Proton donor. Residue glutamate 115 is part of the active site.

It belongs to the GCKR-like family. MurNAc-6-P etherase subfamily. Homodimer.

It catalyses the reaction N-acetyl-D-muramate 6-phosphate + H2O = N-acetyl-D-glucosamine 6-phosphate + (R)-lactate. The protein operates within amino-sugar metabolism; 1,6-anhydro-N-acetylmuramate degradation. It participates in amino-sugar metabolism; N-acetylmuramate degradation. It functions in the pathway cell wall biogenesis; peptidoglycan recycling. Specifically catalyzes the cleavage of the D-lactyl ether substituent of MurNAc 6-phosphate, producing GlcNAc 6-phosphate and D-lactate. Together with AnmK, is also required for the utilization of anhydro-N-acetylmuramic acid (anhMurNAc) either imported from the medium or derived from its own cell wall murein, and thus plays a role in cell wall recycling. This Francisella tularensis subsp. novicida (strain U112) protein is N-acetylmuramic acid 6-phosphate etherase.